Consider the following 171-residue polypeptide: Adenine phosphoribosyltransferase (171 aa).

It belongs to the purine/pyrimidine phosphoribosyltransferase family. Homodimer.

It is found in the cytoplasm. It catalyses the reaction AMP + diphosphate = 5-phospho-alpha-D-ribose 1-diphosphate + adenine. It participates in purine metabolism; AMP biosynthesis via salvage pathway; AMP from adenine: step 1/1. In terms of biological role, catalyzes a salvage reaction resulting in the formation of AMP, that is energically less costly than de novo synthesis. The sequence is that of Adenine phosphoribosyltransferase from Geotalea daltonii (strain DSM 22248 / JCM 15807 / FRC-32) (Geobacter daltonii).